Reading from the N-terminus, the 1306-residue chain is Angiotensin-converting enzyme (1306 aa).

The first 28 residues, 1-28 (MGAASGRRSPPLLLPLLLLLLPPPPVIL), serve as a signal peptide directing secretion. The Extracellular segment spans residues 29 to 1256 (ELDPALQPGN…GLNLEEQQAR (1228 aa)). 2 Peptidase M2 domains span residues 40 to 624 (PADE…LGWP) and 643 to 1222 (VSDE…LGWP). N-linked (GlcNAc...) asparagine glycans are attached at residues asparagine 54, asparagine 74, asparagine 111, asparagine 146, and asparagine 160. An intrachain disulfide couples cysteine 157 to cysteine 165. Position 231 (tyrosine 231) interacts with chloride. The N-linked (GlcNAc...) asparagine glycan is linked to asparagine 318. Residues cysteine 359 and cysteine 377 are joined by a disulfide bond. Position 390 (histidine 390) interacts with Zn(2+). Glutamate 391 (proton acceptor 1) is an active-site residue. The Zn(2+) site is built by histidine 394 and glutamate 418. Asparagine 445 and asparagine 509 each carry an N-linked (GlcNAc...) asparagine glycan. Histidine 520 (proton donor 1) is an active-site residue. Asparagine 523 is a glycosylation site (N-linked (GlcNAc...) asparagine). Arginine 529 contacts chloride. Cysteine 545 and cysteine 557 are oxidised to a cystine. Residues asparagine 673, asparagine 695, asparagine 714, and asparagine 760 are each glycosylated (N-linked (GlcNAc...) asparagine). Cysteines 757 and 763 form a disulfide. 2 residues coordinate chloride: arginine 791 and tyrosine 829. Asparagine 942 carries an N-linked (GlcNAc...) asparagine glycan. Cysteine 957 and cysteine 975 form a disulfide bridge. Residue histidine 988 participates in Zn(2+) binding. The active-site Proton acceptor 2 is the glutamate 989. Zn(2+) contacts are provided by histidine 992 and glutamate 1016. Chloride-binding residues include tryptophan 1090 and arginine 1094. The active-site Proton donor 2 is histidine 1118. A chloride-binding site is contributed by arginine 1127. A disulfide bridge connects residues cysteine 1143 and cysteine 1155. N-linked (GlcNAc...) asparagine glycans are attached at residues asparagine 1191 and asparagine 1225. The segment at 1215–1256 (HGEKLGWPQYNWTPNSARLEGPFVGSGRVNFLGLNLEEQQAR) is juxtamembrane stalk. A helical transmembrane segment spans residues 1257 to 1277 (VGQWVLLFLGVALLVATLGLT). Residues 1278–1306 (QRLFSIRHHSLRRPHRGPQFGSEVELRHS) are Cytoplasmic-facing. Phosphoserine is present on serine 1299.

This sequence belongs to the peptidase M2 family. As to quaternary structure, monomer and homodimer; homodimerizes following binding to an inhibitor. Interacts with calmodulin (CALM1, CALM2 or CALM3); interaction takes place in the cytoplasmic region and regulates phosphorylation and proteolytic cleavage. It depends on Zn(2+) as a cofactor. Requires chloride as cofactor. Post-translationally, produced following proteolytic cleavage by secretase enzymes that cleave the transmembrane form in the juxtamembrane stalk region upstream of the transmembrane region. Cleavage can take place at different sites of the juxtamembrane stalk region. In terms of processing, phosphorylated by CK2 on Ser-1299; which allows membrane retention. Phosphorylated on tyrosine residues on its extracellular part, promoting cleavage by secretase enzymes and formation of the soluble form (Angiotensin-converting enzyme, soluble form).

Its subcellular location is the cell membrane. It localises to the cytoplasm. The protein resides in the secreted. The catalysed reaction is Release of a C-terminal dipeptide, oligopeptide-|-Xaa-Yaa, when Xaa is not Pro, and Yaa is neither Asp nor Glu. Thus, conversion of angiotensin I to angiotensin II, with increase in vasoconstrictor activity, but no action on angiotensin II.. It catalyses the reaction angiotensin I + H2O = L-histidyl-L-leucine + angiotensin II. The enzyme catalyses bradykinin + H2O = L-Phe-L-Arg + bradykinin(1-7). It carries out the reaction substance P + H2O = substance P(1-9) + L-Leu-L-Met-NH2. The catalysed reaction is substance P + H2O = substance P(1-8) + Gly-L-Leu-L-Met-NH2. It catalyses the reaction substance P + H2O = L-Phe-L-Phe-Gly-L-Leu-L-Met-NH2 + substance P(1-6). The enzyme catalyses neurotensin + H2O = neurotensin(1-11) + L-isoleucyl-L-leucine. It carries out the reaction goralatide + H2O = N-acetyl-L-seryl-L-aspartate + L-lysyl-L-proline. The catalysed reaction is Met-enkephalin + H2O = L-phenylalanyl-L-methionine + L-tyrosylglycylglycine. It catalyses the reaction Leu-enkephalin + H2O = L-tyrosylglycylglycine + L-phenylalanyl-L-leucine. The enzyme catalyses Met-enkephalin-Arg-Phe + H2O = L-arginyl-L-phenylalanine + Met-enkephalin. The dipeptidyl carboxypeptidase activity is strongly activated by chloride. The dipeptidyl carboxypeptidase activity is specifically inhibited by lisinopril, captopril and enalaprilat. Its function is as follows. Dipeptidyl carboxypeptidase that removes dipeptides from the C-terminus of a variety of circulating hormones, such as angiotensin I, bradykinin or enkephalins, thereby playing a key role in the regulation of blood pressure, electrolyte homeostasis or synaptic plasticity. Composed of two similar catalytic domains, each possessing a functional active site, with different selectivity for substrates. Plays a major role in the angiotensin-renin system that regulates blood pressure and sodium retention by the kidney by converting angiotensin I to angiotensin II, resulting in an increase of the vasoconstrictor activity of angiotensin. Also able to inactivate bradykinin, a potent vasodilator, and therefore enhance the blood pressure response. Acts as a regulator of synaptic transmission by mediating cleavage of neuropeptide hormones, such as substance P, neurotensin or enkephalins. Catalyzes degradation of different enkephalin neuropeptides (Met-enkephalin, Leu-enkephalin, Met-enkephalin-Arg-Phe and possibly Met-enkephalin-Arg-Gly-Leu). Acts as a regulator of synaptic plasticity in the nucleus accumbens of the brain by mediating cleavage of Met-enkephalin-Arg-Phe, a strong ligand of Mu-type opioid receptor OPRM1, into Met-enkephalin. Met-enkephalin-Arg-Phe cleavage by ACE decreases activation of OPRM1, leading to long-term synaptic potentiation of glutamate release. Also acts as a regulator of hematopoietic stem cell differentiation by mediating degradation of hemoregulatory peptide N-acetyl-SDKP (AcSDKP). Acts as a regulator of cannabinoid signaling pathway by mediating degradation of hemopressin, an antagonist peptide of the cannabinoid receptor CNR1. Involved in amyloid-beta metabolism by catalyzing degradation of Amyloid-beta protein 40 and Amyloid-beta protein 42 peptides, thereby preventing plaque formation. Catalyzes cleavage of cholecystokinin (maturation of Cholecystokinin-8 and Cholecystokinin-5) and Gonadoliberin-1 (both maturation and degradation) hormones. Degradation of hemoregulatory peptide N-acetyl-SDKP (AcSDKP) and amyloid-beta proteins is mediated by the N-terminal catalytic domain, while angiotensin I and cholecystokinin cleavage is mediated by the C-terminal catalytic region. In terms of biological role, soluble form that is released in blood plasma and other body fluids following proteolytic cleavage in the juxtamembrane stalk region. The polypeptide is Angiotensin-converting enzyme (Bos taurus (Bovine)).